The primary structure comprises 409 residues: Probable glutaryl-CoA dehydrogenase, mitochondrial (409 aa).

Arg-110–Ser-111 contacts substrate. FAD contacts are provided by residues Phe-149–Thr-152, Ser-158, and Trp-184–Ser-186. Residue Ser-158 participates in substrate binding. Substrate-binding positions include Phe-261–Asn-265 and Arg-268. The active-site Proton acceptor is the Glu-388. FAD-binding residues include Thr-390 and Phe-408.

Belongs to the acyl-CoA dehydrogenase family. FAD serves as cofactor.

It is found in the mitochondrion matrix. The catalysed reaction is glutaryl-CoA + oxidized [electron-transfer flavoprotein] + 2 H(+) = (2E)-butenoyl-CoA + reduced [electron-transfer flavoprotein] + CO2. Its pathway is amino-acid metabolism; lysine degradation. It functions in the pathway amino-acid metabolism; tryptophan metabolism. In Caenorhabditis elegans, this protein is Probable glutaryl-CoA dehydrogenase, mitochondrial.